Here is a 588-residue protein sequence, read N- to C-terminus: Aspartate--tRNA ligase (588 aa).

Residue glutamate 174 coordinates L-aspartate. An aspartate region spans residues 198–201; that stretch reads QLFK. Position 220 (arginine 220) interacts with L-aspartate. Residues 220–222 and glutamine 229 contribute to the ATP site; that span reads RDE. Histidine 448 is an L-aspartate binding site. Position 482 (glutamate 482) interacts with ATP. Arginine 489 is an L-aspartate binding site. ATP is bound at residue 534-537; sequence GLDR.

It belongs to the class-II aminoacyl-tRNA synthetase family. Type 1 subfamily. In terms of assembly, homodimer.

The protein localises to the cytoplasm. The catalysed reaction is tRNA(Asp) + L-aspartate + ATP = L-aspartyl-tRNA(Asp) + AMP + diphosphate. Catalyzes the attachment of L-aspartate to tRNA(Asp) in a two-step reaction: L-aspartate is first activated by ATP to form Asp-AMP and then transferred to the acceptor end of tRNA(Asp). This chain is Aspartate--tRNA ligase, found in Exiguobacterium sibiricum (strain DSM 17290 / CCUG 55495 / CIP 109462 / JCM 13490 / 255-15).